Consider the following 355-residue polypeptide: Magnesium-chelatase subunit ChlI (355 aa).

47–54 (GDRGTGKS) is a binding site for ATP.

It belongs to the Mg-chelatase subunits D/I family.

The protein localises to the plastid. It is found in the chloroplast. The enzyme catalyses protoporphyrin IX + Mg(2+) + ATP + H2O = Mg-protoporphyrin IX + ADP + phosphate + 3 H(+). The protein operates within porphyrin-containing compound metabolism; chlorophyll biosynthesis. Involved in chlorophyll biosynthesis; introduces a magnesium ion into protoporphyrin IX to yield Mg-protoporphyrin IX. The chain is Magnesium-chelatase subunit ChlI (chlI) from Pyropia yezoensis (Susabi-nori).